A 322-amino-acid polypeptide reads, in one-letter code: Biotin synthase (322 aa).

The Radical SAM core domain occupies 39–266 (NQIQVSSLLN…KSVVRLSAGR (228 aa)). Residues C54, C58, and C61 each coordinate [4Fe-4S] cluster. The [2Fe-2S] cluster site is built by C98, C129, C189, and R261.

This sequence belongs to the radical SAM superfamily. Biotin synthase family. In terms of assembly, homodimer. [4Fe-4S] cluster serves as cofactor. [2Fe-2S] cluster is required as a cofactor.

The catalysed reaction is (4R,5S)-dethiobiotin + (sulfur carrier)-SH + 2 reduced [2Fe-2S]-[ferredoxin] + 2 S-adenosyl-L-methionine = (sulfur carrier)-H + biotin + 2 5'-deoxyadenosine + 2 L-methionine + 2 oxidized [2Fe-2S]-[ferredoxin]. Its pathway is cofactor biosynthesis; biotin biosynthesis; biotin from 7,8-diaminononanoate: step 2/2. In terms of biological role, catalyzes the conversion of dethiobiotin (DTB) to biotin by the insertion of a sulfur atom into dethiobiotin via a radical-based mechanism. This chain is Biotin synthase, found in Ruthia magnifica subsp. Calyptogena magnifica.